We begin with the raw amino-acid sequence, 184 residues long: Putative tetraheme cytochrome-c type (184 aa).

Topologically, residues 1-14 are cytoplasmic; that stretch reads MSKHAASSAKRFSL. A helical membrane pass occupies residues 15 to 35; the sequence is LALGLMFVGGIVFVWAVDFGI. Residues 36–184 lie on the Periplasmic side of the membrane; it reads KTTNTLEFCT…HEPTEPDDAS (149 aa). C44, C47, M50, C73, C76, and H77 together coordinate heme. 2 residues coordinate substrate: K89 and D95. 8 residues coordinate heme: D95, C133, C136, H137, C165, C168, H169, and H174.

Belongs to the NapC/NirT/NrfH family. Binds 4 heme groups per subunit.

It localises to the cell inner membrane. The polypeptide is Putative tetraheme cytochrome-c type (Allochromatium vinosum (strain ATCC 17899 / DSM 180 / NBRC 103801 / NCIMB 10441 / D) (Chromatium vinosum)).